Here is a 382-residue protein sequence, read N- to C-terminus: Protein RecA (382 aa).

The segment at 1–20 is disordered; sequence MPADVKAAQSSAGDSRPGER. Residue 79-86 coordinates ATP; the sequence is GPESSGKT. Positions 360-369 are enriched in low complexity; the sequence is SAAAKPSAKT. Residues 360-382 are disordered; sequence SAAAKPSAKTADTDKKLVADGAA. Over residues 370–382 the composition is skewed to basic and acidic residues; it reads ADTDKKLVADGAA.

The protein belongs to the RecA family.

The protein localises to the cytoplasm. Can catalyze the hydrolysis of ATP in the presence of single-stranded DNA, the ATP-dependent uptake of single-stranded DNA by duplex DNA, and the ATP-dependent hybridization of homologous single-stranded DNAs. It interacts with LexA causing its activation and leading to its autocatalytic cleavage. The polypeptide is Protein RecA (Synechococcus sp. (strain CC9311)).